We begin with the raw amino-acid sequence, 1132 residues long: MEKESVYNLALKCAERQLTSMEFSNLYKEFFNEKFPSLIQEEEEDTTTTANINEVKKASDLVDTPSNNTAATADTTHLHEALDIVCSDFVKILNLEKPLILADYIVEVLLVNYNSDMIKCFLPKLNSVRNSLLLAHFFSKSCSFFAKLSDTLIIDQVRKDLGNVIVPNILSLDMNSMNKELIAIVSKLLQTTLKLSPSPILLTSAGCKNGSFTLLNQLSQTNKLLFKRVSQTFEAKLHFKDTKPFLNKDSTNEFVGSPSLTSPQYIPSPLSSTKPPGSVNSAAKYKDMKLLRYYKNIWLNNKIINWEISNPDFLSKYSAITSSIFQESFNSVQNLDQLLTDLIETSFTCFAQFVSNKQYHQANSNLTLLERKWVIFITKHLPLLILENSSRSPRVVTNALDNIDEKVVKAIRIYFTEKDDNKTNNEDLFDDYPSTSLDIRHDFIKGLIMLNLQPASVINNYLREDQMIDTSILPTRDDLFVRNLQGIQEVVHNTNSFIISSLDTLELESITESITHDSSNGLFQVLHNFESVAPTKQREIVKAFLSIFEDAIKELNYNRIAKICALLFFNFSHSLTTILSFSSPAALMKTLIKFVDLSRNGRNGSNGNDESSEYETINISLSFSWAILLIINLTQTYGISVVDVALKYPELSIKNSFIINFISNLPNVSDKYYLEESNVNDSDMLTKSHNTVQSWLCDLFVNGSITDQLIQNIETRQLANLIPFIVKQVLLSVEIGVLTDISSLIGGFEYFLQPLLLVGLIKTFYWLEQFLSCVKNDTISEDILQGIFNLLNTLFNPVTLNEDSKAFHTAVLRLNAIPLLKVLRKFRVQSQSNYGIYSSDAQGDPNLEPLIAKLVAVLNVSPVYDVDPRIINSENDYSRKQLGYGKFLILNENPINKIMTNQINSFWSLHSSTYYNLDYLFELIELVTPKSFLFDVLKTLEYKLATYGVPGSENKRGSLDSEHVFDYFFYFLVLYDVKTAEEASQLIEYMENDAKKSKGDVDIKGEDLHEKNDSAEVRQETQPKAEATQDDDFDMLFGENDTSTQAYEEEEENEDNDGNNRTNNVPMIKAEETPSKTNKISILKRHSFAVLLHERKLLNDLALENGEITKTENEKFISYHDKYLCMLKTCVF.

The span at 998-1023 (KGDVDIKGEDLHEKNDSAEVRQETQP) shows a compositional bias: basic and acidic residues. The tract at residues 998–1070 (KGDVDIKGED…RTNNVPMIKA (73 aa)) is disordered. Residues 1047-1057 (YEEEEENEDND) are compositionally biased toward acidic residues.

Belongs to the Mediator complex subunit 5 family. In terms of assembly, component of the Mediator complex, which is composed of at least 21 subunits that form three structurally distinct submodules. The Mediator head module contains MED6, MED8, MED11, SRB4/MED17, SRB5/MED18, ROX3/MED19, SRB2/MED20 and SRB6/MED22, the middle module contains MED1, MED4, NUT1/MED5, MED7, CSE2/MED9, NUT2/MED10, SRB7/MED21 and SOH1/MED31, and the tail module contains MED2, PGD1/MED3, RGR1/MED14, GAL11/MED15 and SIN4/MED16. The head and the middle modules interact directly with RNA polymerase II, whereas the elongated tail module interacts with gene-specific regulatory proteins.

It is found in the nucleus. Functionally, component of the Mediator complex, a coactivator involved in the regulated transcription of nearly all RNA polymerase II-dependent genes. Mediator functions as a bridge to convey information from gene-specific regulatory proteins to the basal RNA polymerase II transcription machinery. The Mediator complex, having a compact conformation in its free form, is recruited to promoters by direct interactions with regulatory proteins and serves for the assembly of a functional preinitiation complex with RNA polymerase II and the general transcription factors. The Mediator complex unfolds to an extended conformation and partially surrounds RNA polymerase II, specifically interacting with the unphosphorylated form of the C-terminal domain (CTD) of RNA polymerase II. The Mediator complex dissociates from the RNA polymerase II holoenzyme and stays at the promoter when transcriptional elongation begins. The polypeptide is Mediator of RNA polymerase II transcription subunit 5 (NUT1) (Saccharomyces cerevisiae (strain ATCC 204508 / S288c) (Baker's yeast)).